Reading from the N-terminus, the 117-residue chain is Large ribosomal subunit protein uL24 (117 aa).

This sequence belongs to the universal ribosomal protein uL24 family. Part of the 50S ribosomal subunit.

One of two assembly initiator proteins, it binds directly to the 5'-end of the 23S rRNA, where it nucleates assembly of the 50S subunit. Functionally, one of the proteins that surrounds the polypeptide exit tunnel on the outside of the subunit. The protein is Large ribosomal subunit protein uL24 of Thermosynechococcus vestitus (strain NIES-2133 / IAM M-273 / BP-1).